A 147-amino-acid polypeptide reads, in one-letter code: Large ribosomal subunit protein uL13 (147 aa).

Belongs to the universal ribosomal protein uL13 family. Part of the 50S ribosomal subunit.

Its function is as follows. This protein is one of the early assembly proteins of the 50S ribosomal subunit, although it is not seen to bind rRNA by itself. It is important during the early stages of 50S assembly. In Mycobacterium marinum (strain ATCC BAA-535 / M), this protein is Large ribosomal subunit protein uL13.